The primary structure comprises 444 residues: 3-phosphoshikimate 1-carboxyvinyltransferase (444 aa).

3 residues coordinate 3-phosphoshikimate: Lys-24, Ser-25, and Arg-29. Lys-24 contributes to the phosphoenolpyruvate binding site. Residues Gly-97 and Arg-125 each contribute to the phosphoenolpyruvate site. 3-phosphoshikimate contacts are provided by Ser-170, Gln-172, Asp-318, and Lys-345. Gln-172 is a binding site for phosphoenolpyruvate. The Proton acceptor role is filled by Asp-318. Phosphoenolpyruvate is bound by residues Arg-349 and Arg-391.

This sequence belongs to the EPSP synthase family. As to quaternary structure, monomer.

The protein resides in the cytoplasm. The enzyme catalyses 3-phosphoshikimate + phosphoenolpyruvate = 5-O-(1-carboxyvinyl)-3-phosphoshikimate + phosphate. It participates in metabolic intermediate biosynthesis; chorismate biosynthesis; chorismate from D-erythrose 4-phosphate and phosphoenolpyruvate: step 6/7. Catalyzes the transfer of the enolpyruvyl moiety of phosphoenolpyruvate (PEP) to the 5-hydroxyl of shikimate-3-phosphate (S3P) to produce enolpyruvyl shikimate-3-phosphate and inorganic phosphate. This chain is 3-phosphoshikimate 1-carboxyvinyltransferase, found in Halorhodospira halophila (strain DSM 244 / SL1) (Ectothiorhodospira halophila (strain DSM 244 / SL1)).